The following is a 354-amino-acid chain: Protein Wnt-9a (354 aa).

An N-terminal signal peptide occupies residues 1–15 (MALLRALLGLLACTP). 5 disulfides stabilise this stretch: cysteine 85–cysteine 96, cysteine 133–cysteine 141, cysteine 143–cysteine 160, cysteine 207–cysteine 221, and cysteine 209–cysteine 216. N-linked (GlcNAc...) asparagine glycosylation occurs at asparagine 95. A lipid anchor (O-palmitoleoyl serine; by PORCN) is attached at serine 213. Positions 246–271 (GSTTNEATGEGDISPPKKSIPGHSDQ) are disordered. Intrachain disulfides connect cysteine 288-cysteine 313, cysteine 302-cysteine 308, cysteine 312-cysteine 352, cysteine 328-cysteine 343, cysteine 330-cysteine 340, and cysteine 335-cysteine 336.

It belongs to the Wnt family. Post-translationally, palmitoleoylation is required for efficient binding to frizzled receptors. Depalmitoleoylation leads to Wnt signaling pathway inhibition.

The protein localises to the secreted. It localises to the extracellular space. It is found in the extracellular matrix. Functionally, ligand for members of the frizzled family of seven transmembrane receptors. Functions in the canonical Wnt/beta-catenin signaling pathway. Plays a role in embryonic chondrocyte maturation and in embryonic bone mineralization. The chain is Protein Wnt-9a (WNT9A) from Gallus gallus (Chicken).